Consider the following 426-residue polypeptide: D-cysteine desulfhydrase 1, mitochondrial (426 aa).

The transit peptide at 1–63 directs the protein to the mitochondrion; the sequence is MARGAHQAPG…IGSFLSKRPY (63 aa). The residue at position 119 (Lys119) is an N6-(pyridoxal phosphate)lysine. Catalysis depends on Ser146, which acts as the Nucleophile.

Belongs to the ACC deaminase/D-cysteine desulfhydrase family. Homodimer. Requires pyridoxal 5'-phosphate as cofactor. Present in seeds (at protein level).

The protein resides in the mitochondrion. The enzyme catalyses D-cysteine + H2O = hydrogen sulfide + pyruvate + NH4(+) + H(+). Inhibited by L-cysteine (L-cys). Its function is as follows. Catalyzes the production of hydrogen sulfide (H2S) from D-cysteine (D-cys). This is D-cysteine desulfhydrase 1, mitochondrial from Oryza sativa subsp. japonica (Rice).